The following is a 449-amino-acid chain: Serine--tRNA ligase (449 aa).

255–257 (TSE) lines the L-serine pocket. 286-288 (RSE) contacts ATP. E309 contacts L-serine. 373–376 (EISS) is an ATP binding site. S409 is an L-serine binding site.

This sequence belongs to the class-II aminoacyl-tRNA synthetase family. Type-1 seryl-tRNA synthetase subfamily. In terms of assembly, homodimer. The tRNA molecule binds across the dimer.

The protein localises to the cytoplasm. It carries out the reaction tRNA(Ser) + L-serine + ATP = L-seryl-tRNA(Ser) + AMP + diphosphate + H(+). The enzyme catalyses tRNA(Sec) + L-serine + ATP = L-seryl-tRNA(Sec) + AMP + diphosphate + H(+). The protein operates within aminoacyl-tRNA biosynthesis; selenocysteinyl-tRNA(Sec) biosynthesis; L-seryl-tRNA(Sec) from L-serine and tRNA(Sec): step 1/1. Functionally, catalyzes the attachment of serine to tRNA(Ser). Is also able to aminoacylate tRNA(Sec) with serine, to form the misacylated tRNA L-seryl-tRNA(Sec), which will be further converted into selenocysteinyl-tRNA(Sec). In Bordetella avium (strain 197N), this protein is Serine--tRNA ligase.